A 955-amino-acid polypeptide reads, in one-letter code: Anion exchange protein 4 (955 aa).

Disordered regions lie at residues 20 to 50 (VGQL…PEDP), 154 to 190 (HTQT…PLRQ), and 331 to 352 (PHRT…PELQ). The next 4 helical transmembrane spans lie at 387–407 (AVLY…GLLG), 415–435 (GVLE…LMAG), 472–492 (VGIW…SVLV), and 503–523 (FCAL…LNLA). A membrane (anion exchange) region spans residues 387–955 (AVLYIYLATV…KAPEINISVN (569 aa)). Asn-548 and Asn-572 each carry an N-linked (GlcNAc...) asparagine glycan. The next 7 helical transmembrane spans lie at 596–616 (VPDI…FAIA), 637–657 (FSSI…GLAM), 684–704 (PWWL…LIFM), 730–750 (LFCV…WYVS), 785–804 (LTGL…APVL), 811–830 (VLYG…IQFM), and 871–891 (LWII…LGLV). The segment at 918–955 (RNVPEKGLEPGHSFSGSDSEDSELMYQPKAPEINISVN) is disordered. An N-linked (GlcNAc...) asparagine glycan is attached at Asn-951.

Belongs to the anion exchanger (TC 2.A.31) family. As to expression, highly expressed in kidney. Expressed in the outer medulla and the inner medulla in the kidney cortex. Only expressed in beta-intercalated cells.

Its subcellular location is the lateral cell membrane. The protein resides in the apical cell membrane. It is found in the basolateral cell membrane. It catalyses the reaction 2 hydrogencarbonate(out) + chloride(in) + Na(+)(out) = 2 hydrogencarbonate(in) + chloride(out) + Na(+)(in). The catalysed reaction is K(+)(in) + 2 hydrogencarbonate(in) + chloride(out) = K(+)(out) + 2 hydrogencarbonate(out) + chloride(in). The enzyme catalyses Li(+)(in) + 2 hydrogencarbonate(in) + chloride(out) = Li(+)(out) + 2 hydrogencarbonate(out) + chloride(in). It carries out the reaction Rb(+)(in) + 2 hydrogencarbonate(in) + chloride(out) = Rb(+)(out) + 2 hydrogencarbonate(out) + chloride(in). It catalyses the reaction Cs(+)(in) + 2 hydrogencarbonate(in) + chloride(out) = Cs(+)(out) + 2 hydrogencarbonate(out) + chloride(in). In terms of biological role, electroneutral Cl(-)/HCO3(-) antiporter that favors chloride ion entry and efflux of hydrogencarbonate and sodium ion across the basolateral membrane and may participat in salivary secretion. Also mediates Cl(-)/HCO3(-) exchange activity in the presence of K(+) as well as Cs(+), Li(+), and Rb(+). Does not contribute to Cl(-)/HCO3(-) exchanger in the apical membrane of the upper villous epithelium. The polypeptide is Anion exchange protein 4 (Oryctolagus cuniculus (Rabbit)).